Reading from the N-terminus, the 212-residue chain is Phosphatidylserine decarboxylase proenzyme (212 aa).

The active-site Schiff-base intermediate with substrate; via pyruvic acid is serine 182. The residue at position 182 (serine 182) is a Pyruvic acid (Ser); by autocatalysis.

This sequence belongs to the phosphatidylserine decarboxylase family. PSD-A subfamily. Heterodimer of a large membrane-associated beta subunit and a small pyruvoyl-containing alpha subunit. The cofactor is pyruvate. Post-translationally, is synthesized initially as an inactive proenzyme. Formation of the active enzyme involves a self-maturation process in which the active site pyruvoyl group is generated from an internal serine residue via an autocatalytic post-translational modification. Two non-identical subunits are generated from the proenzyme in this reaction, and the pyruvate is formed at the N-terminus of the alpha chain, which is derived from the carboxyl end of the proenzyme. The post-translation cleavage follows an unusual pathway, termed non-hydrolytic serinolysis, in which the side chain hydroxyl group of the serine supplies its oxygen atom to form the C-terminus of the beta chain, while the remainder of the serine residue undergoes an oxidative deamination to produce ammonia and the pyruvoyl prosthetic group on the alpha chain.

It is found in the cell membrane. It carries out the reaction a 1,2-diacyl-sn-glycero-3-phospho-L-serine + H(+) = a 1,2-diacyl-sn-glycero-3-phosphoethanolamine + CO2. The protein operates within phospholipid metabolism; phosphatidylethanolamine biosynthesis; phosphatidylethanolamine from CDP-diacylglycerol: step 2/2. Functionally, catalyzes the formation of phosphatidylethanolamine (PtdEtn) from phosphatidylserine (PtdSer). This chain is Phosphatidylserine decarboxylase proenzyme, found in Chlorobium chlorochromatii (strain CaD3).